Reading from the N-terminus, the 196-residue chain is uncharacterized protein (196 aa).

Residues Met-22–Ile-42 traverse the membrane as a helical segment.

Its subcellular location is the cell membrane. This is an uncharacterized protein from Lactobacillus acidophilus (strain ATCC 700396 / NCK56 / N2 / NCFM).